Here is a 901-residue protein sequence, read N- to C-terminus: HTH-type transcriptional regulator MalT (901 aa).

39 to 46 (SPAGYGKT) is an ATP binding site. One can recognise an HTH luxR-type domain in the interval 829–894 (ELIRTSPLTQ…AAVQHAQKLL (66 aa)). Positions 853–872 (NEQIAGELEVAATTIKTHIR) form a DNA-binding region, H-T-H motif.

It belongs to the MalT family. As to quaternary structure, monomer in solution. Oligomerizes to an active state in the presence of the positive effectors ATP and maltotriose.

Activated by ATP and maltotriose, which are both required for DNA binding. Positively regulates the transcription of the maltose regulon whose gene products are responsible for uptake and catabolism of malto-oligosaccharides. Specifically binds to the promoter region of its target genes, recognizing a short DNA motif called the MalT box. This Escherichia coli O127:H6 (strain E2348/69 / EPEC) protein is HTH-type transcriptional regulator MalT.